The chain runs to 286 residues: uncharacterized protein (286 aa).

Residues I54, N128, and K162 each contribute to the NADP(+) site. The active-site Proton donor is S178. NADP(+) is bound by residues Y192, K196, I225, and T227. Y192 acts as the Proton acceptor in catalysis. The active-site Lowers pKa of active site Tyr is K196.

The protein belongs to the short-chain dehydrogenases/reductases (SDR) family.

This is an uncharacterized protein from Schizosaccharomyces pombe (strain 972 / ATCC 24843) (Fission yeast).